We begin with the raw amino-acid sequence, 510 residues long: Ninja-family protein mc410 (510 aa).

3 disordered regions span residues M1–L179, H323–F414, and R481–S510. 2 stretches are compositionally biased toward basic and acidic residues: residues S31–N44 and R103–R146. The span at S148 to A160 shows a compositional bias: polar residues. 2 stretches are compositionally biased toward basic and acidic residues: residues R363–V389 and R397–R406. Positions V485 to V496 are enriched in polar residues. Low complexity predominate over residues S497–S510.

This sequence belongs to the Ninja family.

It is found in the nucleus. In Nicotiana tabacum (Common tobacco), this protein is Ninja-family protein mc410 (MC410).